Reading from the N-terminus, the 162-residue chain is Phosphopantetheine adenylyltransferase (162 aa).

Serine 11 is a substrate binding site. Residues 11–12 (SF) and histidine 19 contribute to the ATP site. Substrate is bound by residues lysine 43, valine 76, and arginine 90. ATP is bound by residues 91-93 (GLR), glutamate 101, and 126-132 (HLYISSS).

The protein belongs to the bacterial CoaD family. In terms of assembly, homohexamer. Mg(2+) serves as cofactor.

It localises to the cytoplasm. The enzyme catalyses (R)-4'-phosphopantetheine + ATP + H(+) = 3'-dephospho-CoA + diphosphate. It functions in the pathway cofactor biosynthesis; coenzyme A biosynthesis; CoA from (R)-pantothenate: step 4/5. Its function is as follows. Reversibly transfers an adenylyl group from ATP to 4'-phosphopantetheine, yielding dephospho-CoA (dPCoA) and pyrophosphate. The polypeptide is Phosphopantetheine adenylyltransferase (Streptococcus pneumoniae (strain JJA)).